Consider the following 214-residue polypeptide: uncharacterized protein (214 aa).

Residues 131-214 form a disordered region; the sequence is TEDILSPPSP…SSSSDSLDAY (84 aa). Basic residues predominate over residues 174–189; that stretch reads HRRRRTRRQLRYRQRV. The span at 197 to 214 shows a compositional bias: low complexity; it reads DLGEPLESSSSSDSLDAY.

This is an uncharacterized protein from Tupaia.